Reading from the N-terminus, the 116-residue chain is SPbeta prophage-derived uncharacterized protein YoqA (116 aa).

The polypeptide is SPbeta prophage-derived uncharacterized protein YoqA (yoqA) (Bacillus subtilis (strain 168)).